Here is a 108-residue protein sequence, read N- to C-terminus: Cytochrome bo(3) ubiquinol oxidase subunit 4 (108 aa).

The Cytoplasmic segment spans residues 1–16 (MNKYKKIKNNFDKEKK). The helical transmembrane segment at 17-37 (SYIVGFLFSLFLTIIPFFCTL) threads the bilayer. Topologically, residues 38–46 (NHLFSRKIN) are extracellular. Residues 47-67 (FFVILLCALSQIIIHFIYFLH) form a helical membrane-spanning segment. The Cytoplasmic portion of the chain corresponds to 68–77 (LDFSKKNSWN). A helical membrane pass occupies residues 78 to 98 (IISLLFILIIVFIIVFGSIWI). Over 99–108 (MYNLNHHVIL) the chain is Extracellular.

This sequence belongs to the cytochrome c oxidase bacterial subunit 4 family. As to quaternary structure, heterooctamer of two A chains, two B chains, two C chains and two D chains.

It is found in the cell membrane. Its function is as follows. Cytochrome bo(3) ubiquinol terminal oxidase is the component of the aerobic respiratory chain of E.coli that predominates when cells are grown at high aeration. Has proton pump activity across the membrane in addition to electron transfer, pumping 2 protons/electron. This Buchnera aphidicola subsp. Schizaphis graminum (strain Sg) protein is Cytochrome bo(3) ubiquinol oxidase subunit 4 (cyoD).